The chain runs to 1058 residues: Carbamoyl phosphate synthase large chain (1058 aa).

The carboxyphosphate synthetic domain stretch occupies residues 1 to 401; it reads MPKRTDIQKI…SLLKACRSLE (401 aa). Arg129, Arg169, Gly175, Gly176, Arg208, Ile210, Glu215, Gly241, Ile242, His243, Gln284, and Glu298 together coordinate ATP. Residues 133 to 327 enclose the ATP-grasp 1 domain; that stretch reads KQLMEELEQP…IAKLAAKIAV (195 aa). The Mg(2+) site is built by Gln284, Glu298, and Asn300. Residues Gln284, Glu298, and Asn300 each coordinate Mn(2+). The oligomerization domain stretch occupies residues 402–546; it reads IGVHHNEIPE…YSTYGWENES (145 aa). The carbamoyl phosphate synthetic domain stretch occupies residues 547–929; it reads IRSDKESVLV…ALYKAFEASY (383 aa). Residues 671-861 enclose the ATP-grasp 2 domain; that stretch reads EQALKELDIP…MAQVATKLIL (191 aa). ATP-binding residues include Arg707, Ser746, Ile748, Glu752, Gly777, Val778, His779, Ser780, Gln820, and Glu832. Positions 820, 832, and 834 each coordinate Mg(2+). Residues Gln820, Glu832, and Asn834 each coordinate Mn(2+). An MGS-like domain is found at 930–1058; it reads LHLPTFGNVV…ESRSFVTEAI (129 aa). Residues 930–1058 are allosteric domain; the sequence is LHLPTFGNVV…ESRSFVTEAI (129 aa).

Belongs to the CarB family. In terms of assembly, composed of two chains; the small (or glutamine) chain promotes the hydrolysis of glutamine to ammonia, which is used by the large (or ammonia) chain to synthesize carbamoyl phosphate. Tetramer of heterodimers (alpha,beta)4. Mg(2+) serves as cofactor. The cofactor is Mn(2+).

The enzyme catalyses hydrogencarbonate + L-glutamine + 2 ATP + H2O = carbamoyl phosphate + L-glutamate + 2 ADP + phosphate + 2 H(+). The catalysed reaction is hydrogencarbonate + NH4(+) + 2 ATP = carbamoyl phosphate + 2 ADP + phosphate + 2 H(+). It functions in the pathway amino-acid biosynthesis; L-arginine biosynthesis; carbamoyl phosphate from bicarbonate: step 1/1. Its pathway is pyrimidine metabolism; UMP biosynthesis via de novo pathway; (S)-dihydroorotate from bicarbonate: step 1/3. In terms of biological role, large subunit of the glutamine-dependent carbamoyl phosphate synthetase (CPSase). CPSase catalyzes the formation of carbamoyl phosphate from the ammonia moiety of glutamine, carbonate, and phosphate donated by ATP, constituting the first step of 2 biosynthetic pathways, one leading to arginine and/or urea and the other to pyrimidine nucleotides. The large subunit (synthetase) binds the substrates ammonia (free or transferred from glutamine from the small subunit), hydrogencarbonate and ATP and carries out an ATP-coupled ligase reaction, activating hydrogencarbonate by forming carboxy phosphate which reacts with ammonia to form carbamoyl phosphate. The polypeptide is Carbamoyl phosphate synthase large chain (Streptococcus pneumoniae (strain 70585)).